The following is a 191-amino-acid chain: Transcription factor FapR (191 aa).

This sequence belongs to the FapR family.

Functionally, transcriptional factor involved in regulation of membrane lipid biosynthesis by repressing genes involved in fatty acid and phospholipid metabolism. The protein is Transcription factor FapR of Oceanobacillus iheyensis (strain DSM 14371 / CIP 107618 / JCM 11309 / KCTC 3954 / HTE831).